A 308-amino-acid chain; its full sequence is UPF0282 protein M164_2122 (308 aa).

It belongs to the UPF0282 family.

In Saccharolobus islandicus (strain M.16.4 / Kamchatka #3) (Sulfolobus islandicus), this protein is UPF0282 protein M164_2122.